Consider the following 266-residue polypeptide: F-actin-capping protein subunit beta (266 aa).

It belongs to the F-actin-capping protein beta subunit family. As to quaternary structure, component of the F-actin capping complex, composed of a heterodimer of an alpha and a beta subunit.

Its subcellular location is the cytoplasm. The protein localises to the cytoskeleton. It is found in the actin patch. In terms of biological role, F-actin-capping proteins bind in a Ca(2+)-independent manner to the fast growing ends of actin filaments (barbed end) thereby blocking the exchange of subunits at these ends. Unlike other capping proteins (such as gelsolin and severin), these proteins do not sever actin filaments. The chain is F-actin-capping protein subunit beta (cap2) from Aspergillus oryzae (strain ATCC 42149 / RIB 40) (Yellow koji mold).